Consider the following 217-residue polypeptide: Adenylate kinase (217 aa).

10–15 is a binding site for ATP; it reads GAGKGT. An NMP region spans residues 30–59; the sequence is STGDMLRAAVKAGTPLGLQAKDIMASGGLV. Residues Thr31, Arg36, 57-59, 85-88, and Gln92 contribute to the AMP site; these read GLV and GFPR. The tract at residues 122 to 159 is LID; the sequence is GRRVHEASGRVYHIIHNAPRVEGHDDVTGEPLVQRPDD. ATP-binding positions include Arg123 and 132 to 133; that span reads VY. Arg156 and Arg167 together coordinate AMP. Gly203 contributes to the ATP binding site.

The protein belongs to the adenylate kinase family. Monomer.

It is found in the cytoplasm. It catalyses the reaction AMP + ATP = 2 ADP. Its pathway is purine metabolism; AMP biosynthesis via salvage pathway; AMP from ADP: step 1/1. Its function is as follows. Catalyzes the reversible transfer of the terminal phosphate group between ATP and AMP. Plays an important role in cellular energy homeostasis and in adenine nucleotide metabolism. This chain is Adenylate kinase, found in Cellvibrio japonicus (strain Ueda107) (Pseudomonas fluorescens subsp. cellulosa).